Consider the following 245-residue polypeptide: Probable phosphatase CKO_02035 (245 aa).

Zn(2+) contacts are provided by His7, His9, His15, His40, Glu73, His101, His131, Asp192, and His194.

This sequence belongs to the PHP family. Homotrimer. Zn(2+) serves as cofactor.

In Citrobacter koseri (strain ATCC BAA-895 / CDC 4225-83 / SGSC4696), this protein is Probable phosphatase CKO_02035.